A 1196-amino-acid chain; its full sequence is METKPKTATTIKVPPGPLGYVYARACPSEGIELLALLSARSGDSDVAVAPLVVGLTVESGFEANVAVVVGSRTTGLGGTAVSLKLTPSHYSSSVYVFHGGRHLDPSTQAPNLTRLCERARRHFGFSDYTPRPGDLKHETTGEALCERLGLDPDRALLYLVVTEGFKEAVCINNTFLHLGGSDKVTIGGAEVHRIPVYPLQLFMPDFSRVIAEPFNANHRSIGEKFTYPLPFFNRPLNRLLFEAVVGPAAVALRCRNVDAVARAAAHLAFDENHEGAALPADITFTAFEASQGKTPRGGRDGGGKGAAGGFEQRLASVMAGDAALALESIVSMAVFDEPPTDISAWPLFEGQDTAAARANAVGAYLARAAGLVGAMVFSTNSALHLTEVDDAGPADPKDHSKPSFYRFFLVPGTHVAANPQVDREGHVVPGFEGRPTAPLVGGTQEFAGEHLAMLCGFSPALLAKMLFYLERCDGAVIVGRQEMDVFRYVADSNQTDVPCNLCTFDTRHACVHTTLMRLRARHPKFASAARGAIGVFGTMNSMYSDCDVLGNYAAFSALKRADGSETARTIMQETYRAATERVMAELETLQYVDQAVPTAMGRLETIITNREALHTVVNNVRQVVDREVEQLMRNLVEGRNFKFRDGLGEANHAMSLTLDPYACGPCPLLQLLGRRSNLAVYQDLALSQCHGVFAGQSVEGRNFRNQFQPVLRRRVMDMFNNGFLSAKTLTVALSEGAAICAPSLTAGQTAPAESSFEGDVARVTLGFPKELRVKSRVLFAGASANASEAAKARVASLQSAYQKPDKRVDILLGPLGFLLKQFHAAIFPNGKPPGSNQPNPQWFWTALQRNQLPARLLSREDIETIAFIKKFSLDYGAINFINLAPNNVSELAMYYMANQILRYCDHSTYFINTLTAIIAGSRRPPSVQAAAAWSAQGGAGLEAGARALMDAVDAHPGAWTSMFASCNLLRPVMAARPMVVLGLSISKYYGMAGNDRVFQAGNWASLMGGKNACPLLIFDRTRKFVLACPRAGFVCAASSLGGGAHESSLCEQLRGIISEGGAAVASSVFVATVKSLGPRTQQLQIEDWLALLEDEYLSEEMMELTARALERGNGEWSTDAALEVAHEAEALVSQLGNAGEVFNFGDFGCEDDNATPFGGPGAPGPAFAGRKRAFHGDDPFGEGPPDKKGDLTLDML.

The segment at cysteine 499–histidine 512 is a zinc-finger region. 2 consecutive short sequence motifs (required for filament formation) follow at residues phenylalanine 843–tryptophan 844 and phenylalanine 1142–phenylalanine 1144. The tract at residues glycine 1158–leucine 1196 is disordered. The interval arginine 1170 to leucine 1196 is required for nuclear localization. The segment covering phenylalanine 1174 to leucine 1196 has biased composition (basic and acidic residues).

Belongs to the herpesviridae major DNA-binding protein family. As to quaternary structure, homooligomers. Forms double-helical filaments necessary for the formation of replication compartments within the host nucleus. Interacts with the origin-binding protein. Interacts with the helicase primase complex; this interaction stimulates primer synthesis activity of the helicase-primase complex. Interacts with the DNA polymerase. Interacts with the alkaline exonuclease; this interaction increases its nuclease processivity. Interacts with ICP27; this interaction plays a role in the stimulation of late gene transcription.

It is found in the host nucleus. Functionally, plays several crucial roles in viral infection. Participates in the opening of the viral DNA origin to initiate replication by interacting with the origin-binding protein. May disrupt loops, hairpins and other secondary structures present on ssDNA to reduce and eliminate pausing of viral DNA polymerase at specific sites during elongation. Promotes viral DNA recombination by performing strand-transfer, characterized by the ability to transfer a DNA strand from a linear duplex to a complementary single-stranded DNA circle. Can also catalyze the renaturation of complementary single strands. Additionally, reorganizes the host cell nucleus, leading to the formation of prereplicative sites and replication compartments. This process is driven by the protein which can form double-helical filaments in the absence of DNA. This is Major DNA-binding protein from Homo sapiens (Human).